A 168-amino-acid polypeptide reads, in one-letter code: Disulfide bond formation protein B (168 aa).

Over 1 to 11 the chain is Cytoplasmic; sequence MSNPMRPVRSI. A helical membrane pass occupies residues 12 to 28; the sequence is LLAIFTGCAGLIGYALY. Residues 29 to 46 lie on the Periplasmic side of the membrane; that stretch reads LQLVENLLPCPLCVVQRM. A disulfide bridge connects residues cysteine 38 and cysteine 41. The helical transmembrane segment at 47–63 threads the bilayer; it reads AYWLIGLTALAGFFHTP. The Cytoplasmic portion of the chain corresponds to 64–69; it reads ETTGRR. A helical membrane pass occupies residues 70-87; sequence IYAGLMAVFAFTGGLVAL. Topologically, residues 88 to 143 are periplasmic; the sequence is RQAWLVRYPEAFECGISPEEAFLNALPLARWWPVMFEANGDCADVTWKFASLTLPD. Cysteine 101 and cysteine 129 are oxidised to a cystine. A helical transmembrane segment spans residues 144–162; that stretch reads WSAIFFMILAALSIYVLLV. Residues 163–168 lie on the Cytoplasmic side of the membrane; it reads RENQRE.

It belongs to the DsbB family.

The protein localises to the cell inner membrane. Functionally, required for disulfide bond formation in some periplasmic proteins. Acts by oxidizing the DsbA protein. The protein is Disulfide bond formation protein B of Nitrosospira multiformis (strain ATCC 25196 / NCIMB 11849 / C 71).